Here is a 681-residue protein sequence, read N- to C-terminus: U3 small nucleolar ribonucleoprotein protein MPP10 (681 aa).

Phosphoserine is present on residues serine 61, serine 120, and serine 140. Positions 109-139 (ECEDEECEEDASEVEADNQENLETDLDEEQL) form a coiled coil. Residues 111–144 (EDEECEEDASEVEADNQENLETDLDEEQLSDEGG) are compositionally biased toward acidic residues. 3 disordered regions span residues 111–202 (EDEE…SVVD), 215–256 (LEKV…GRQK), and 268–365 (YKDF…EKRQ). The segment covering 145–163 (DVPKGRDRAKSSRKSDPRK) has biased composition (basic and acidic residues). Phosphoserine occurs at positions 164, 168, and 172. Positions 215–227 (LEKVEKEEEKRPD) are enriched in basic and acidic residues. Acidic residues-rich tracts occupy residues 228-248 (GEEE…DESE) and 273-322 (DPVE…EDEN). A phosphoserine mark is found at serine 244, serine 247, serine 277, and serine 346. Residues 349–383 (AVKQESDEVKSSFEKRQEKMNEKIASLEKELLDKK) are a coiled coil. A Glycyl lysine isopeptide (Lys-Gly) (interchain with G-Cter in SUMO2) cross-link involves residue lysine 351. The segment covering 352 to 365 (QESDEVKSSFEKRQ) has biased composition (basic and acidic residues). Glycyl lysine isopeptide (Lys-Gly) (interchain with G-Cter in SUMO2) cross-links involve residues lysine 383 and lysine 395. The stretch at 471–491 (AEIYEQEYLKLNQQKTEEEDN) forms a coiled coil. Lysine 556 participates in a covalent cross-link: Glycyl lysine isopeptide (Lys-Gly) (interchain with G-Cter in SUMO2). A compositionally biased stretch (basic and acidic residues) spans 560-576 (KAGDLKTAAEKTATDKK). The disordered stretch occupies residues 560 to 644 (KAGDLKTAAE…RKDKPLKSSQ (85 aa)). The stretch at 575–604 (KKRERRKKKYQKRLKIKEKEKRKKLLEKNN) forms a coiled coil. Residues 577–599 (RERRKKKYQKRLKIKEKEKRKKL) are compositionally biased toward basic residues. Lysine 609 bears the N6-acetyllysine mark. A compositionally biased stretch (basic and acidic residues) spans 630–640 (LLKDERKDKPL). Glycyl lysine isopeptide (Lys-Gly) (interchain with G-Cter in SUMO2) cross-links involve residues lysine 632 and lysine 649. Positions 657–681 (QINDAKQPEKIKKKKQDISVHKLKL) are disordered. Positions 662-681 (KQPEKIKKKKQDISVHKLKL) are enriched in basic and acidic residues.

This sequence belongs to the MPP10 family. In terms of assembly, part of the small subunit (SSU) processome, composed of more than 70 proteins and the RNA chaperone small nucleolar RNA (snoRNA) U3. Component of a heterotrimeric complex containing IMP3, IMP4 and MPHOSPH10. Interacts with IMP3 and IMP4. Post-translationally, phosphorylated in M (mitotic) phase.

The protein localises to the nucleus. It localises to the nucleolus. It is found in the chromosome. Component of the 60-80S U3 small nucleolar ribonucleoprotein (U3 snoRNP). Required for the early cleavages during pre-18S ribosomal RNA processing. Part of the small subunit (SSU) processome, first precursor of the small eukaryotic ribosomal subunit. During the assembly of the SSU processome in the nucleolus, many ribosome biogenesis factors, an RNA chaperone and ribosomal proteins associate with the nascent pre-rRNA and work in concert to generate RNA folding, modifications, rearrangements and cleavage as well as targeted degradation of pre-ribosomal RNA by the RNA exosome. The sequence is that of U3 small nucleolar ribonucleoprotein protein MPP10 (Mphosph10) from Mus musculus (Mouse).